The sequence spans 107 residues: Pathogenesis-related protein PR-4 (107 aa).

The region spanning 1–107 (QNINWDLRTA…VNYDFVDCGD (107 aa)) is the Barwin domain. Intrachain disulfides connect Cys-14/Cys-46, Cys-35/Cys-69, and Cys-49/Cys-105.

In terms of tissue distribution, preferentially expressed in the tissue surrounding the abscission zone of fruitlets.

The protein resides in the secreted. The protein localises to the cell wall. May be involved in protecting plant tissues from pathogen infection. The sequence is that of Pathogenesis-related protein PR-4 from Prunus persica (Peach).